Reading from the N-terminus, the 72-residue chain is PAMP-induced secreted peptide 1 (72 aa).

The signal sequence occupies residues 1-30 (MRRVSWSTVLIVVVMVSLFFVEHVVVPAAA). Residues P65 and P67 each carry the 4-hydroxyproline modification.

In terms of processing, contains 4-hydroxyproline; hydroxylated on Pro-65 and Pro-67. As to expression, expressed in guard cells, hydathodes, leaf trichomes, and vascular tissues of leaves and roots.

The protein localises to the secreted. Its subcellular location is the extracellular space. The protein resides in the apoplast. Functionally, endogenous secreted peptide that acts as elicitor of immune response and positive regulator of defense response. Amplifies the immune response triggered by flg22, the active epitope of bacterial flagellin. Acts as a negative regulator of root growth. This chain is PAMP-induced secreted peptide 1, found in Arabidopsis thaliana (Mouse-ear cress).